A 701-amino-acid polypeptide reads, in one-letter code: Polyribonucleotide nucleotidyltransferase (701 aa).

2 residues coordinate Mg(2+): D487 and D493. Positions 554–613 constitute a KH domain; it reads PTMIAMKIDTDKIRDVIGKGGATIRAICEETKASIDIEDDGSIKIFGESKEAAEAARQRV. Positions 623 to 691 constitute an S1 motif domain; that stretch reads GKIYIGKVER…NRGRIKLSIK (69 aa).

The protein belongs to the polyribonucleotide nucleotidyltransferase family. As to quaternary structure, component of the RNA degradosome, which is a multiprotein complex involved in RNA processing and mRNA degradation. Mg(2+) is required as a cofactor.

It localises to the cytoplasm. The enzyme catalyses RNA(n+1) + phosphate = RNA(n) + a ribonucleoside 5'-diphosphate. Involved in mRNA degradation. Catalyzes the phosphorolysis of single-stranded polyribonucleotides processively in the 3'- to 5'-direction. This chain is Polyribonucleotide nucleotidyltransferase, found in Pseudomonas syringae pv. syringae (strain B728a).